A 240-amino-acid chain; its full sequence is Endonuclease NucS 1 (240 aa).

It belongs to the NucS endonuclease family.

It localises to the cytoplasm. In terms of biological role, cleaves both 3' and 5' ssDNA extremities of branched DNA structures. This chain is Endonuclease NucS 1, found in Halobacterium salinarum (strain ATCC 700922 / JCM 11081 / NRC-1) (Halobacterium halobium).